A 249-amino-acid chain; its full sequence is MATAGEESQTQAGRHQEVGHKSLLQSDALYQYILETSVYPREPEPMKELREITAKHPWNIMTTSADEGQFLNMLLKLINAKNTMEIGVFTGYSLLATALALPDDGKILAMDINRENYELGLPVIQKAGVADKIDFREGPALPILDQLIEDGKQGSFDFIFVDADKDNYLNYHKRLIELVKVGGLIGYDNTLWNGSVVAPPDAPLRKYVRYYRDFVLELNKALAADPRIEICMLPVGDGITLCRRIQLSI.

Substrate is bound at residue Lys21. S-adenosyl-L-methionine contacts are provided by residues Thr63, Glu85, 87–88, Ser93, Asp111, and Ala140; that span reads GV. Asp162 provides a ligand contact to substrate. Position 162 (Asp162) interacts with a divalent metal cation. An S-adenosyl-L-methionine-binding site is contributed by Asp164. The a divalent metal cation site is built by Asp188 and Asn189. Residue Asn193 participates in substrate binding.

This sequence belongs to the class I-like SAM-binding methyltransferase superfamily. Cation-dependent O-methyltransferase family. CCoAMT subfamily. As to quaternary structure, homodimer. It depends on a divalent metal cation as a cofactor.

It catalyses the reaction (E)-caffeoyl-CoA + S-adenosyl-L-methionine = (E)-feruloyl-CoA + S-adenosyl-L-homocysteine + H(+). It participates in aromatic compound metabolism; phenylpropanoid biosynthesis. Functionally, methylates caffeoyl-CoA to feruloyl-CoA and 5-hydroxyferuloyl-CoA to sinapoyl-CoA. Plays a role in the synthesis of feruloylated polysaccharides. Involved in the reinforcement of the plant cell wall. Also involved in the responding to wounding or pathogen challenge by the increased formation of cell wall-bound ferulic acid polymers. This chain is Caffeoyl-CoA O-methyltransferase, found in Eucalyptus gunnii (Cider gum).